The chain runs to 227 residues: 7-cyano-7-deazaguanine synthase (227 aa).

16-26 (FSGGQDSTTCL) is a binding site for ATP. The Zn(2+) site is built by Cys-194, Cys-202, Cys-205, and Cys-208.

It belongs to the QueC family. The cofactor is Zn(2+).

The enzyme catalyses 7-carboxy-7-deazaguanine + NH4(+) + ATP = 7-cyano-7-deazaguanine + ADP + phosphate + H2O + H(+). Its pathway is purine metabolism; 7-cyano-7-deazaguanine biosynthesis. Its function is as follows. Catalyzes the ATP-dependent conversion of 7-carboxy-7-deazaguanine (CDG) to 7-cyano-7-deazaguanine (preQ(0)). The polypeptide is 7-cyano-7-deazaguanine synthase (Haemophilus influenzae (strain PittEE)).